We begin with the raw amino-acid sequence, 124 residues long: Small ribosomal subunit protein uS12 (124 aa).

D89 carries the post-translational modification 3-methylthioaspartic acid. The tract at residues 103–124 (DTAGVQNRNRGRSKYGAKRPKK) is disordered. The segment covering 111-124 (NRGRSKYGAKRPKK) has biased composition (basic residues).

Belongs to the universal ribosomal protein uS12 family. In terms of assembly, part of the 30S ribosomal subunit. Contacts proteins S8 and S17. May interact with IF1 in the 30S initiation complex.

Functionally, with S4 and S5 plays an important role in translational accuracy. In terms of biological role, interacts with and stabilizes bases of the 16S rRNA that are involved in tRNA selection in the A site and with the mRNA backbone. Located at the interface of the 30S and 50S subunits, it traverses the body of the 30S subunit contacting proteins on the other side and probably holding the rRNA structure together. The combined cluster of proteins S8, S12 and S17 appears to hold together the shoulder and platform of the 30S subunit. The chain is Small ribosomal subunit protein uS12 from Desulforudis audaxviator (strain MP104C).